The chain runs to 268 residues: Small ribosomal subunit protein uS3 (268 aa).

The region spanning 38–106 (IRKLLATGME…QVQLNILEVK (69 aa)) is the KH type-2 domain. The segment at 218–268 (VAAPAGDRPRRERPSRPRRSGATGTTATSTEAGRAATATADAPATTEQKEG) is disordered. Positions 237–268 (SGATGTTATSTEAGRAATATADAPATTEQKEG) are enriched in low complexity.

The protein belongs to the universal ribosomal protein uS3 family. In terms of assembly, part of the 30S ribosomal subunit. Forms a tight complex with proteins S10 and S14.

Its function is as follows. Binds the lower part of the 30S subunit head. Binds mRNA in the 70S ribosome, positioning it for translation. This Rhodococcus jostii (strain RHA1) protein is Small ribosomal subunit protein uS3.